The following is a 276-amino-acid chain: Secreted RxLR effector protein 150 (276 aa).

The first 18 residues, 1–18 (MRNIAFLIGLFFIGYSSC), serve as a signal peptide directing secretion. Residues 49–64 (RTLQADDRERILAEER) carry the RxLR-dEER motif.

The protein belongs to the RxLR effector family.

The protein localises to the secreted. It localises to the host nucleus. Its subcellular location is the host cytoplasm. Its function is as follows. Secreted effector that partially suppresses the host cell death induced by cell death-inducing proteins. This chain is Secreted RxLR effector protein 150, found in Plasmopara viticola (Downy mildew of grapevine).